Reading from the N-terminus, the 122-residue chain is Large ribosomal subunit protein uL14 (122 aa).

This sequence belongs to the universal ribosomal protein uL14 family. As to quaternary structure, part of the 50S ribosomal subunit. Forms a cluster with proteins L3 and L19. In the 70S ribosome, L14 and L19 interact and together make contacts with the 16S rRNA in bridges B5 and B8.

Functionally, binds to 23S rRNA. Forms part of two intersubunit bridges in the 70S ribosome. The sequence is that of Large ribosomal subunit protein uL14 from Thermus aquaticus.